A 429-amino-acid chain; its full sequence is MITETLTASSARPGEAAALIAEMGARARTAAKRLAQTPTAEKAAALKAAAGAIRARSAAILAANAEDMAAGQTNGLSGAMLDRLRLDEGRLAAIADAIEAVAALPDPVGREIDRFTRPNGLELSRVRVPLGVIGIIYESRPNVTADAAALGLMAGNAVILRGGSEAVHSNRALHAAFAAGLVEAGLPADAVQLVPTQDRAAVGAMLRAQGLIDIIIPRGGKGLVARVQDEARVPVLAHLDGINHLYIDGAANPAKAVELAVNAKMRRTGICGATETILIDRAYPAPLGIVDALIAAGCEVRGDRDVAALSPHVESASAGDWDTEYLDAIVSIAMVDGLDGALAHIDAHSSRHTDAIVTEDAATAERFLTGVDSAIVMHNASTQFADGGEFGLGAEIGIATGRLHARGPVALEGLTTYKWLVRGSGQLRP.

This sequence belongs to the gamma-glutamyl phosphate reductase family.

The protein resides in the cytoplasm. It catalyses the reaction L-glutamate 5-semialdehyde + phosphate + NADP(+) = L-glutamyl 5-phosphate + NADPH + H(+). It participates in amino-acid biosynthesis; L-proline biosynthesis; L-glutamate 5-semialdehyde from L-glutamate: step 2/2. Functionally, catalyzes the NADPH-dependent reduction of L-glutamate 5-phosphate into L-glutamate 5-semialdehyde and phosphate. The product spontaneously undergoes cyclization to form 1-pyrroline-5-carboxylate. This is Gamma-glutamyl phosphate reductase from Sphingopyxis alaskensis (strain DSM 13593 / LMG 18877 / RB2256) (Sphingomonas alaskensis).